The sequence spans 119 residues: Large ribosomal subunit protein uL18 (119 aa).

The protein belongs to the universal ribosomal protein uL18 family. In terms of assembly, part of the 50S ribosomal subunit; part of the 5S rRNA/L5/L18/L25 subcomplex. Contacts the 5S and 23S rRNAs.

Functionally, this is one of the proteins that bind and probably mediate the attachment of the 5S RNA into the large ribosomal subunit, where it forms part of the central protuberance. This Clostridium kluyveri (strain ATCC 8527 / DSM 555 / NBRC 12016 / NCIMB 10680 / K1) protein is Large ribosomal subunit protein uL18.